Here is a 483-residue protein sequence, read N- to C-terminus: UDP-N-acetylmuramoyl-L-alanyl-D-glutamate--2,6-diaminopimelate ligase (483 aa).

UDP-N-acetyl-alpha-D-muramoyl-L-alanyl-D-glutamate is bound at residue Ser30. 109–115 (GTNGKTT) contacts ATP. UDP-N-acetyl-alpha-D-muramoyl-L-alanyl-D-glutamate is bound by residues 151–152 (TT), Ser178, and Arg186. The residue at position 218 (Lys218) is an N6-carboxylysine. Meso-2,6-diaminopimelate is bound by residues Arg380, 403–406 (DNPR), Gly453, and Glu457. The Meso-diaminopimelate recognition motif motif lies at 403–406 (DNPR).

It belongs to the MurCDEF family. MurE subfamily. The cofactor is Mg(2+). Post-translationally, carboxylation is probably crucial for Mg(2+) binding and, consequently, for the gamma-phosphate positioning of ATP.

It is found in the cytoplasm. The enzyme catalyses UDP-N-acetyl-alpha-D-muramoyl-L-alanyl-D-glutamate + meso-2,6-diaminopimelate + ATP = UDP-N-acetyl-alpha-D-muramoyl-L-alanyl-gamma-D-glutamyl-meso-2,6-diaminopimelate + ADP + phosphate + H(+). It participates in cell wall biogenesis; peptidoglycan biosynthesis. Catalyzes the addition of meso-diaminopimelic acid to the nucleotide precursor UDP-N-acetylmuramoyl-L-alanyl-D-glutamate (UMAG) in the biosynthesis of bacterial cell-wall peptidoglycan. The protein is UDP-N-acetylmuramoyl-L-alanyl-D-glutamate--2,6-diaminopimelate ligase of Chlamydia abortus (strain DSM 27085 / S26/3) (Chlamydophila abortus).